A 96-amino-acid polypeptide reads, in one-letter code: Co-chaperonin GroES (96 aa).

This sequence belongs to the GroES chaperonin family. In terms of assembly, heptamer of 7 subunits arranged in a ring. Interacts with the chaperonin GroEL.

The protein resides in the cytoplasm. Functionally, together with the chaperonin GroEL, plays an essential role in assisting protein folding. The GroEL-GroES system forms a nano-cage that allows encapsulation of the non-native substrate proteins and provides a physical environment optimized to promote and accelerate protein folding. GroES binds to the apical surface of the GroEL ring, thereby capping the opening of the GroEL channel. This is Co-chaperonin GroES from Tremblaya princeps.